The primary structure comprises 555 residues: 5'-nucleotidase-related protein (555 aa).

The signal sequence occupies residues 1–25 (MKSLIGTLGLYCLFILTNNVVSSYG). The a divalent metal cation site is built by Asp38, His40, and Asp91. The N-linked (GlcNAc...) asparagine glycan is linked to Asn105. Asn123 lines the a divalent metal cation pocket. N-linked (GlcNAc...) asparagine glycosylation occurs at Asn198. His225 and His249 together coordinate a divalent metal cation. Asn295 carries an N-linked (GlcNAc...) asparagine glycan. Residues Arg358, Arg402, and Phe421 each coordinate AMP. Asn465 carries an N-linked (GlcNAc...) asparagine glycan. Phe505 and Asp511 together coordinate AMP.

Belongs to the 5'-nucleotidase family. Mg(2+) is required as a cofactor. Requires Mn(2+) as cofactor. Salivary gland (at protein level). Saliva (at protein level).

It is found in the secreted. The enzyme catalyses a ribonucleoside 5'-triphosphate + 2 H2O = a ribonucleoside 5'-phosphate + 2 phosphate + 2 H(+). DEPC (2 mM), sodium fluoride (10 mM) and 4,4'-Diisothiocyano-2,2'-stilbenedisulfonic acid (DIDS, 100 uM) nearly completely abrogate activity. Concanavalin A enhances activity. Its function is as follows. Facilitates hematophagy by inhibiting ADP-dependent platelet aggregation and promoting disaggregation of ADP-stimulated platelets in the host. Cleaves adenosine triphosphate (ATP) and adenosine diphosphate (ADP) to adenosine monophosphate (AMP) and inorganic phosphate. Interacts with fibrinogen receptor integrin alpha-IIb/beta-3 (ITGA2B/ITGB3). This is 5'-nucleotidase-related protein from Glossina morsitans morsitans (Savannah tsetse fly).